The primary structure comprises 433 residues: CinA-like protein (433 aa).

The protein belongs to the CinA family.

The polypeptide is CinA-like protein (Prochlorococcus marinus subsp. pastoris (strain CCMP1986 / NIES-2087 / MED4)).